The primary structure comprises 564 residues: MRSDKIKKGVEQAPARSLLHATGQIKSPGDMDKPFIAICNSYIDIVPGHVHLRELADVAKEAIREAGGIPFEFNTIGVDDGIAMGHIGMRYSLPSREVIADAAETVINAHWFDGVFYIPNCDKITPGMLLASVRTNVPAIFCSGGPMKAGLSAHGKALTLSSVFEAVGAFKEGSMSQEDFLDMEANACPTCGSCAGMFTANSMNCLMEILGMAVPGNGTTLAVSDARRELIRESAFHLMDLVKKDIRPRDIITKDAIDDAFALDMAMGGSTNTVLHTLALANEAGIEDYDLERINDIAKRVPYLSKIAPSSSYSMHDVHEAGGVSAIIKELVDLGGAIHPDRITVTGKTIRENVADAKINNTDVIHPKENPYSPVGGLSMLFGNIAPKGATIKVGGVDPSVQVFKGEAICFSSHDEAVEAIDNHTVREGHVVVIRYEGPKGGPGMPEMLAPTSSIVGRGLGKDVALITDGRFSGATRGIAVGHISPEAAAGGPIALVHDGDIITIDLPNRTLNVDVPDEVLEERRKELPKFKAKVKTGYLARYTALVTSAHTGGILQIPEDLID.

D80 contacts Mg(2+). [2Fe-2S] cluster is bound at residue C121. Positions 122 and 123 each coordinate Mg(2+). K123 carries the post-translational modification N6-carboxylysine. Residue C194 coordinates [2Fe-2S] cluster. E447 is a binding site for Mg(2+). S473 (proton acceptor) is an active-site residue.

Belongs to the IlvD/Edd family. Homodimer. [2Fe-2S] cluster serves as cofactor. Mg(2+) is required as a cofactor.

The enzyme catalyses (2R)-2,3-dihydroxy-3-methylbutanoate = 3-methyl-2-oxobutanoate + H2O. The catalysed reaction is (2R,3R)-2,3-dihydroxy-3-methylpentanoate = (S)-3-methyl-2-oxopentanoate + H2O. Its pathway is amino-acid biosynthesis; L-isoleucine biosynthesis; L-isoleucine from 2-oxobutanoate: step 3/4. It participates in amino-acid biosynthesis; L-valine biosynthesis; L-valine from pyruvate: step 3/4. Functionally, functions in the biosynthesis of branched-chain amino acids. Catalyzes the dehydration of (2R,3R)-2,3-dihydroxy-3-methylpentanoate (2,3-dihydroxy-3-methylvalerate) into 2-oxo-3-methylpentanoate (2-oxo-3-methylvalerate) and of (2R)-2,3-dihydroxy-3-methylbutanoate (2,3-dihydroxyisovalerate) into 2-oxo-3-methylbutanoate (2-oxoisovalerate), the penultimate precursor to L-isoleucine and L-valine, respectively. In Listeria innocua serovar 6a (strain ATCC BAA-680 / CLIP 11262), this protein is Dihydroxy-acid dehydratase.